Reading from the N-terminus, the 268-residue chain is uncharacterized protein (268 aa).

A signal peptide spans 1-18; the sequence is MRGFLLLSLGVFSFSALA. Domain regions lie at residues 24–184 and 185–268; these read SHDL…ELLP and SPAT…NWLR. A disulfide bond links C110 and C115.

Monomer.

Its subcellular location is the periplasm. This is an uncharacterized protein from Pseudomonas aeruginosa (strain ATCC 15692 / DSM 22644 / CIP 104116 / JCM 14847 / LMG 12228 / 1C / PRS 101 / PAO1).